The sequence spans 354 residues: tRNA N6-adenosine threonylcarbamoyltransferase (354 aa).

H115 and H119 together coordinate Fe cation. Substrate-binding positions include 138–142 (LVSGG), D171, G184, and N276. Residue D304 participates in Fe cation binding.

It belongs to the KAE1 / TsaD family. Fe(2+) is required as a cofactor.

The protein localises to the cytoplasm. It carries out the reaction L-threonylcarbamoyladenylate + adenosine(37) in tRNA = N(6)-L-threonylcarbamoyladenosine(37) in tRNA + AMP + H(+). Its function is as follows. Required for the formation of a threonylcarbamoyl group on adenosine at position 37 (t(6)A37) in tRNAs that read codons beginning with adenine. Is involved in the transfer of the threonylcarbamoyl moiety of threonylcarbamoyl-AMP (TC-AMP) to the N6 group of A37, together with TsaE and TsaB. TsaD likely plays a direct catalytic role in this reaction. The protein is tRNA N6-adenosine threonylcarbamoyltransferase of Xanthomonas oryzae pv. oryzae (strain MAFF 311018).